The chain runs to 211 residues: Nucleoside triphosphate pyrophosphatase (211 aa).

Residue Asp75 is the Proton acceptor of the active site.

The protein belongs to the Maf family. Requires a divalent metal cation as cofactor.

The protein localises to the cytoplasm. It carries out the reaction a ribonucleoside 5'-triphosphate + H2O = a ribonucleoside 5'-phosphate + diphosphate + H(+). It catalyses the reaction a 2'-deoxyribonucleoside 5'-triphosphate + H2O = a 2'-deoxyribonucleoside 5'-phosphate + diphosphate + H(+). Its function is as follows. Nucleoside triphosphate pyrophosphatase. May have a dual role in cell division arrest and in preventing the incorporation of modified nucleotides into cellular nucleic acids. The chain is Nucleoside triphosphate pyrophosphatase from Prochlorococcus marinus (strain NATL1A).